Reading from the N-terminus, the 142-residue chain is Large ribosomal subunit protein uL11 (142 aa).

The protein belongs to the universal ribosomal protein uL11 family. As to quaternary structure, part of the ribosomal stalk of the 50S ribosomal subunit. Interacts with L10 and the large rRNA to form the base of the stalk. L10 forms an elongated spine to which L12 dimers bind in a sequential fashion forming a multimeric L10(L12)X complex. One or more lysine residues are methylated.

Functionally, forms part of the ribosomal stalk which helps the ribosome interact with GTP-bound translation factors. The sequence is that of Large ribosomal subunit protein uL11 from Vibrio vulnificus (strain YJ016).